Reading from the N-terminus, the 163-residue chain is ATP synthase subunit b (163 aa).

The chain crosses the membrane as a helical span at residues 9-29 (GLLIAQLINVVFVVWLLTTFL).

Belongs to the ATPase B chain family. In terms of assembly, F-type ATPases have 2 components, F(1) - the catalytic core - and F(0) - the membrane proton channel. F(1) has five subunits: alpha(3), beta(3), gamma(1), delta(1), epsilon(1). F(0) has four main subunits: a(1), b(2) and c(10-14). The alpha and beta chains form an alternating ring which encloses part of the gamma chain. F(1) is attached to F(0) by a central stalk formed by the gamma and epsilon chains, while a peripheral stalk is formed by the delta and b chains.

Its subcellular location is the cell membrane. Its function is as follows. F(1)F(0) ATP synthase produces ATP from ADP in the presence of a proton or sodium gradient. F-type ATPases consist of two structural domains, F(1) containing the extramembraneous catalytic core and F(0) containing the membrane proton channel, linked together by a central stalk and a peripheral stalk. During catalysis, ATP synthesis in the catalytic domain of F(1) is coupled via a rotary mechanism of the central stalk subunits to proton translocation. Functionally, component of the F(0) channel, it forms part of the peripheral stalk, linking F(1) to F(0). The polypeptide is ATP synthase subunit b (Roseiflexus castenholzii (strain DSM 13941 / HLO8)).